The sequence spans 520 residues: Dihydropyrimidinase 2 (520 aa).

Residues His59, His61, and Lys152 each coordinate Zn(2+). Residue Lys152 is modified to N6-carboxylysine. Tyr157 provides a ligand contact to substrate. Positions 185 and 241 each coordinate Zn(2+). Residue Ser291 participates in substrate binding. Residue Asp319 participates in Zn(2+) binding. Position 340 (Asn340) interacts with substrate.

Belongs to the metallo-dependent hydrolases superfamily. Hydantoinase/dihydropyrimidinase family. Homotetramer. Zn(2+) serves as cofactor. Carboxylation allows a single lysine to coordinate two zinc ions. In terms of tissue distribution, body wall muscles.

The enzyme catalyses 5,6-dihydrouracil + H2O = 3-(carbamoylamino)propanoate + H(+). This chain is Dihydropyrimidinase 2 (dhp-2), found in Caenorhabditis elegans.